A 355-amino-acid chain; its full sequence is Beta-ketoacyl-[acyl-carrier-protein] synthase III 1 (355 aa).

Catalysis depends on residues Cys122 and His280. The interval 281-285 (QANER) is ACP-binding. Residue Asn311 is part of the active site.

The protein belongs to the thiolase-like superfamily. FabH family. In terms of assembly, homodimer.

Its subcellular location is the cytoplasm. It carries out the reaction malonyl-[ACP] + acetyl-CoA + H(+) = 3-oxobutanoyl-[ACP] + CO2 + CoA. Its pathway is lipid metabolism; fatty acid biosynthesis. Catalyzes the condensation reaction of fatty acid synthesis by the addition to an acyl acceptor of two carbons from malonyl-ACP. Catalyzes the first condensation reaction which initiates fatty acid synthesis and may therefore play a role in governing the total rate of fatty acid production. Possesses both acetoacetyl-ACP synthase and acetyl transacylase activities. Its substrate specificity determines the biosynthesis of branched-chain and/or straight-chain of fatty acids. This Streptomyces avermitilis (strain ATCC 31267 / DSM 46492 / JCM 5070 / NBRC 14893 / NCIMB 12804 / NRRL 8165 / MA-4680) protein is Beta-ketoacyl-[acyl-carrier-protein] synthase III 1.